The following is a 93-amino-acid chain: Small ribosomal subunit protein uS19 (93 aa).

The protein belongs to the universal ribosomal protein uS19 family.

Protein S19 forms a complex with S13 that binds strongly to the 16S ribosomal RNA. The protein is Small ribosomal subunit protein uS19 of Nautilia profundicola (strain ATCC BAA-1463 / DSM 18972 / AmH).